The primary structure comprises 1420 residues: MKDLVKFLKAQSKTSEDFDVIKIGLASPDMIRSWSYGEVKKPETINYRTFKPERDGLFCARIFGPVKDYECLCGKYKRLKHRGVICEKCGVEVTQAKVRRERMGHIELASPVAHIWFLKSLPSRIGLLLDMPLRDIERVLYFESYIVIEPGMTDLERGQLLTEEQFLDAEDRWQDEFDAKMGAEAIQALLRDMDLEVECETLREELQSTNSETKRKKITKRLKLLESFIQSGNKPEWMVMTVLPVLPPDLRPLVPLDGGRFATSDLNDLYRRVINRNNRLKRLLDLIAPDIIVRNEKRMLQESVDALLDNGRRGRAITGSNRRPLKSLADMIKGKQGRFRQNLLGKRVDYSGRSVITVGPYLHLHQCGLPKKMALELFRPFIYAKLESRGFATTIKAAKKMVEREDAIVWDILADVIREHPILLNRAPTLHRLGIQAFEPILIEGKAIQLHPLVCAAFNADFDGDQMAVHVPLTLEAQLEARALMMSTNNILSPANGEPIIVPSQDVVLGLYYMTRDKVNGKGEGMLLQDSREAEKAYRTGQAELHSRVKVRITEYVKNAIGEFEPQTHLVDTTIGRAILWMIAPKGMPFSLFNQTLGKKAISKLINESYRRLGLKESVLFADHIMYTGFAYAARSGSSVGIDDMVIPQKKYEIISAAEEEVAEIQEQFQSGLVTAGERYNKVIDIWAAANERVAKAMMENLSQEEVINREGQPEKQASFNSIFMMADSGARGSAAQIRQLAGMRGLMARPDGSIIETPITANFREGLNVLQYFISTHGARKGLADTALKTANSGYLTRRLVDVAQDLVIIEDDCGTHEGIVMTPLIEGGDVKEALRDRVLGRVAAEDILKPGTNEVLISRNTLLDEKLCDVIDENSVDSIKVRSVVTCDTDFGVCAKCYGRDLARGHLINQGEAVGVIAAQSIGEPGTQLTMRTFHIGGAASAAAKESSVQVKNTGTLRLTNVKFVTNKEGKLVLTSRNTELTIIDTFGRTKEHYKVPYGAVLNHADGEEVTAGETVANWDPHTMPVISEVSGFVKFVEIVDGLTVTRQTDELTGLSSIVVQDVGERATAGKDLRPALKLVDAQGNDIFIPGTDVMAQYFLPGKAIVSLDDGAEVFVGEPLARIPQESVGTKDITGGLPRVADLFEARKPKEPAILAEISGIVSFGKETKGKRRLLITPMEGETYEEMIPKWRQLNVFEGELVQRGDLISDGAETPHDILRLRGVHAVTDYIVNEVQEVYRLQGVKINDKHIEVIVRQMLRKAIITNAYDSEFLEGEQVEVARVKIVNRKRAEEGKPLVEFERELLGITKASLATESFISAASFQETTRVLTEAAVAGKRDELRGLKENVIVGRLIPAGTGFAYHQNRQKNRLVGGMENTTEVKLSAVDEEEIASEFTFSAEDATANLAEMLNMADDAE.

C71, C73, C86, and C89 together coordinate Zn(2+). Residues D461, D463, and D465 each coordinate Mg(2+). Zn(2+)-binding residues include C815, C889, C896, and C899.

This sequence belongs to the RNA polymerase beta' chain family. In terms of assembly, the RNAP catalytic core consists of 2 alpha, 1 beta, 1 beta' and 1 omega subunit. When a sigma factor is associated with the core the holoenzyme is formed, which can initiate transcription. Mg(2+) serves as cofactor. The cofactor is Zn(2+).

It carries out the reaction RNA(n) + a ribonucleoside 5'-triphosphate = RNA(n+1) + diphosphate. DNA-dependent RNA polymerase catalyzes the transcription of DNA into RNA using the four ribonucleoside triphosphates as substrates. The chain is DNA-directed RNA polymerase subunit beta' from Histophilus somni (strain 2336) (Haemophilus somnus).